Reading from the N-terminus, the 261-residue chain is Cytosolic Fe-S cluster assembly factor Nubp2 homolog (261 aa).

14 to 21 provides a ligand contact to ATP; that stretch reads GKGGVGKS. The [4Fe-4S] cluster site is built by Cys-188 and Cys-191.

This sequence belongs to the Mrp/NBP35 ATP-binding proteins family. NUBP2/CFD1 subfamily. Heterotetramer of 2 Nubp1 and 2 Nubp2 chains. It depends on [4Fe-4S] cluster as a cofactor.

The protein localises to the cytoplasm. Component of the cytosolic iron-sulfur (Fe/S) protein assembly (CIA) machinery. Required for maturation of extramitochondrial Fe-S proteins. The Nubp1-Nubp2 heterotetramer forms a Fe-S scaffold complex, mediating the de novo assembly of an Fe-S cluster and its transfer to target apoproteins. This Drosophila willistoni (Fruit fly) protein is Cytosolic Fe-S cluster assembly factor Nubp2 homolog.